Consider the following 103-residue polypeptide: Large ribosomal subunit protein bL21 (103 aa).

It belongs to the bacterial ribosomal protein bL21 family. Part of the 50S ribosomal subunit. Contacts protein L20.

In terms of biological role, this protein binds to 23S rRNA in the presence of protein L20. The chain is Large ribosomal subunit protein bL21 from Haemophilus influenzae (strain PittEE).